Here is a 336-residue protein sequence, read N- to C-terminus: DNA polymerase beta (336 aa).

K(+) is bound by residues Lys-59, Leu-61, and Val-64. The Na(+) site is built by Lys-59, Leu-61, and Val-64. Residue Lys-71 is the Nucleophile; Schiff-base intermediate with DNA; for 5'-dRP lyase activity of the active site. The residue at position 82 (Arg-82) is an Omega-N-methylarginine; by PRMT6. 3 residues coordinate K(+): Thr-100, Val-102, and Ile-105. 3 residues coordinate Na(+): Thr-100, Val-102, and Ile-105. Residue Arg-148 coordinates a 2'-deoxyribonucleoside 5'-triphosphate. An Omega-N-methylarginine; by PRMT6 modification is found at Arg-151. Residues Ser-179, Arg-182, Gly-188, and Asp-189 each contribute to the a 2'-deoxyribonucleoside 5'-triphosphate site. The DNA-binding stretch occupies residues 182–191 (RGAESSGDID). Positions 189, 191, and 257 each coordinate Mg(2+).

This sequence belongs to the DNA polymerase type-X family. It depends on Mg(2+) as a cofactor. Post-translationally, methylation by PRMT6 stimulates the polymerase activity by enhancing DNA binding and processivity. In terms of processing, ubiquitinated: monoubiquitinated by huwe1/arf-bp1. Monoubiquitinated protein is then the target of stub1/chip, which catalyzes polyubiquitination from monoubiquitin, leading to degradation by the proteasome. usp47 mediates the deubiquitination of monoubiquitinated protein, preventing polyubiquitination by STUB1/CHIP and its subsequent degradation.

It is found in the nucleus. The protein localises to the cytoplasm. It carries out the reaction DNA(n) + a 2'-deoxyribonucleoside 5'-triphosphate = DNA(n+1) + diphosphate. The catalysed reaction is a 5'-end 2'-deoxyribose-2'-deoxyribonucleotide-DNA = (2E,4S)-4-hydroxypenten-2-al-5-phosphate + a 5'-end 5'-phospho-2'-deoxyribonucleoside-DNA + H(+). The enzyme catalyses 2'-deoxyribonucleotide-(2'-deoxyribose 5'-phosphate)-2'-deoxyribonucleotide-DNA = a 3'-end 2'-deoxyribonucleotide-(2,3-dehydro-2,3-deoxyribose 5'-phosphate)-DNA + a 5'-end 5'-phospho-2'-deoxyribonucleoside-DNA + H(+). In terms of biological role, repair polymerase that plays a key role in base-excision repair. During this process, the damaged base is excised by specific DNA glycosylases, the DNA backbone is nicked at the abasic site by an apurinic/apyrimidic (AP) endonuclease, and POLB removes 5'-deoxyribose-phosphate from the preincised AP site acting as a 5'-deoxyribose-phosphate lyase (5'-dRP lyase); through its DNA polymerase activity, it adds one nucleotide to the 3' end of the arising single-nucleotide gap. Conducts 'gap-filling' DNA synthesis in a stepwise distributive fashion rather than in a processive fashion as for other DNA polymerases. It is also able to cleave sugar-phosphate bonds 3' to an intact AP site, acting as an AP lyase. The protein is DNA polymerase beta (polb) of Danio rerio (Zebrafish).